Consider the following 169-residue polypeptide: Small ribosomal subunit protein uS5 (169 aa).

In terms of domain architecture, S5 DRBM spans 14-77 (LQEKLVAVRR…EQARKNMRKV (64 aa)).

It belongs to the universal ribosomal protein uS5 family. Part of the 30S ribosomal subunit. Contacts proteins S4 and S8.

With S4 and S12 plays an important role in translational accuracy. In terms of biological role, located at the back of the 30S subunit body where it stabilizes the conformation of the head with respect to the body. In Methylococcus capsulatus (strain ATCC 33009 / NCIMB 11132 / Bath), this protein is Small ribosomal subunit protein uS5.